The sequence spans 412 residues: Subtilisin-like protease 6 (412 aa).

The first 20 residues, 1–20 (MGFITKAIPIVLAALSTVNG), serve as a signal peptide directing secretion. Residues 21-127 (ARILEAGPHA…VRATTNGTNL (107 aa)) constitute a propeptide that is removed on maturation. The Inhibitor I9 domain maps to 36 to 120 (KYIVVMKKDV…FIEPDFVVRA (85 aa)). A Peptidase S8 domain is found at 135-412 (SWGLARVSTR…SKLIYNGSGK (278 aa)). Residues aspartate 167 and histidine 198 each act as charge relay system in the active site. N-linked (GlcNAc...) asparagine glycosylation is found at asparagine 252, asparagine 264, and asparagine 325. The Charge relay system role is filled by serine 358. Residue asparagine 408 is glycosylated (N-linked (GlcNAc...) asparagine).

It belongs to the peptidase S8 family.

Its subcellular location is the secreted. In terms of biological role, secreted subtilisin-like serine protease with keratinolytic activity that contributes to pathogenicity. The protein is Subtilisin-like protease 6 (SUB6) of Trichophyton verrucosum (strain HKI 0517).